A 712-amino-acid polypeptide reads, in one-letter code: Elongation factor G (712 aa).

Residues 8–290 (TRYRNIGISA…AVIEFLPSPT (283 aa)) form the tr-type G domain. GTP is bound by residues 17 to 24 (AHIDAGKT), 88 to 92 (DTPGH), and 142 to 145 (NKMD).

It belongs to the TRAFAC class translation factor GTPase superfamily. Classic translation factor GTPase family. EF-G/EF-2 subfamily.

It localises to the cytoplasm. Its function is as follows. Catalyzes the GTP-dependent ribosomal translocation step during translation elongation. During this step, the ribosome changes from the pre-translocational (PRE) to the post-translocational (POST) state as the newly formed A-site-bound peptidyl-tRNA and P-site-bound deacylated tRNA move to the P and E sites, respectively. Catalyzes the coordinated movement of the two tRNA molecules, the mRNA and conformational changes in the ribosome. The chain is Elongation factor G from Acinetobacter baumannii (strain AB307-0294).